A 282-amino-acid chain; its full sequence is Ribosomal protein L11 methyltransferase (282 aa).

S-adenosyl-L-methionine is bound by residues threonine 133, glycine 154, aspartate 175, and asparagine 216.

The protein belongs to the methyltransferase superfamily. PrmA family.

It is found in the cytoplasm. The catalysed reaction is L-lysyl-[protein] + 3 S-adenosyl-L-methionine = N(6),N(6),N(6)-trimethyl-L-lysyl-[protein] + 3 S-adenosyl-L-homocysteine + 3 H(+). Its function is as follows. Methylates ribosomal protein L11. This is Ribosomal protein L11 methyltransferase from Campylobacter jejuni subsp. doylei (strain ATCC BAA-1458 / RM4099 / 269.97).